We begin with the raw amino-acid sequence, 280 residues long: HCLS1-associated protein X-1 (280 aa).

Serine 2 carries the N-acetylserine modification. The tract at residues 2 to 45 (SVFDLFRGFFGFPGPRSHRDPFFGGMTRDDDDDDDDDDEAEEDR) is required for localization in mitochondria. Disordered regions lie at residues 12-70 (GFPG…SFSP) and 100-263 (TLPS…SALD). Over residues 30–43 (DDDDDDDDDDEAEE) the composition is skewed to acidic residues. Residues 115 to 280 (TPGERLREGQ…LLLGRWFRSR (166 aa)) are involved in HCLS1 binding. Composition is skewed to basic and acidic residues over residues 116-125 (PGERLREGQT) and 134-154 (PDSH…KPES). Residues 176–207 (VSPHSRAKEDKDLDSQVSQEGLGPLLQPQPKS) form an involved in CASP9 binding region. The interval 177–248 (SPHSRAKEDK…TTVTHQEAHD (72 aa)) is involved in GNA13 binding. The tract at residues 184 to 280 (EDKDLDSQVS…LLLGRWFRSR (97 aa)) is required for localization in sarcoplasmic reticulum. The interval 185 to 280 (DKDLDSQVSQ…LLLGRWFRSR (96 aa)) is involved in PKD2 binding. Phosphoserine occurs at positions 190 and 193. The segment at 204-226 (QPKSYFKSISVTKITKPDGTVEE) is involved in PLN binding. An involved in ATP2A2 binding region spans residues 204 to 246 (QPKSYFKSISVTKITKPDGTVEERRTVVDSEGRRETTVTHQEA). Positions 211-280 (SISVTKITKP…LLLGRWFRSR (70 aa)) are mediates interaction with UCP3. The span at 218–256 (TKPDGTVEERRTVVDSEGRRETTVTHQEAHDSSRSDPDS) shows a compositional bias: basic and acidic residues. The required for ITGB6 binding stretch occupies residues 271 to 280 (LLLGRWFRSR).

The protein belongs to the HAX1 family. Interacts with ABCB1, ABCB4 and ABCB11. Directly associates with HCLS1/HS1, through binding to its N-terminal region. Interacts with CTTN. Interacts with PKD2. Interacts with GNA13. Interacts with CASP9. Interacts with ITGB6. Interacts with PLN and ATP2A2; these interactions are inhibited by calcium. Interacts with GRB7. Interacts (via C-terminus) with XIAP/BIRC4 (via BIR 2 domain and BIR 3 domain) and this interaction blocks ubiquitination of XIAP/BIRC4. Interacts with TPC2. Interacts with KCNC3. Interacts with XPO1. Interacts with RNF217. Interacts with UCP3; the interaction is direct and calcium-dependent. Interacts with MAPRE2; this interaction regulates cell migration in keratinocytes. As to expression, ubiquitous, with highest levels in kidney and liver (at protein level).

The protein resides in the mitochondrion matrix. Its subcellular location is the endoplasmic reticulum. It is found in the nucleus membrane. The protein localises to the cytoplasmic vesicle. It localises to the cytoplasm. The protein resides in the cell cortex. Its subcellular location is the cell membrane. It is found in the sarcoplasmic reticulum. The protein localises to the P-body. It localises to the nucleus. Recruits the Arp2/3 complex to the cell cortex and regulates reorganization of the cortical actin cytoskeleton via its interaction with KCNC3 and the Arp2/3 complex. Slows down the rate of inactivation of KCNC3 channels. Promotes GNA13-mediated cell migration. Involved in the clathrin-mediated endocytosis pathway. May be involved in internalization of ABC transporters such as ABCB11. May inhibit CASP9 and CASP3. Promotes cell survival. May regulate intracellular calcium pools. The chain is HCLS1-associated protein X-1 (Hax1) from Mus musculus (Mouse).